A 182-amino-acid chain; its full sequence is ADP-ribosylation factor 1 (182 aa).

Gly-2 carries N-myristoyl glycine lipidation. GTP contacts are provided by residues 24–31 (GLDAAGKT), 67–71 (DVGGQ), and 126–129 (NKQD).

The protein belongs to the small GTPase superfamily. Arf family.

The protein localises to the golgi apparatus. The catalysed reaction is GTP + H2O = GDP + phosphate + H(+). GTP-binding protein involved in protein trafficking; may modulate vesicle budding and uncoating within the Golgi apparatus. This chain is ADP-ribosylation factor 1 (arfA), found in Dictyostelium discoideum (Social amoeba).